Reading from the N-terminus, the 238-residue chain is Tetraspanin-4 (238 aa).

At 1-13 the chain is on the cytoplasmic side; the sequence is MARACLQAVKYLM. Residues 14 to 34 form a helical membrane-spanning segment; that stretch reads FAFNLLFWLGGCGVLGVGIWL. Residues 35–55 lie on the Extracellular side of the membrane; the sequence is AATQGSFATLSSSFPSLSAAN. Residues 56–76 form a helical membrane-spanning segment; sequence LLIITGAFVMAIGFVGCLGAI. The Cytoplasmic segment spans residues 77–85; that stretch reads KENKCLLLT. Residues 86 to 106 traverse the membrane as a helical segment; that stretch reads FFLLLLLVFLLEATIAILFFA. The Extracellular portion of the chain corresponds to 107-201; sequence YTDKIDRYAQ…ETVKVWLQEN (95 aa). N-linked (GlcNAc...) asparagine glycosylation is found at Asn152 and Asn161. A helical transmembrane segment spans residues 202 to 222; the sequence is LLAVGIFGLCTALVQILGLTF. Topologically, residues 223-238 are cytoplasmic; sequence AMTMYCQVVKADTYCA.

Belongs to the tetraspanin (TM4SF) family. Forms a complex with integrins. Interacts with HRH4. Expressed in multiple tissues but is absent in brain, lymphoid cells, and platelets.

The protein localises to the cell membrane. Structural component of specialized membrane microdomains known as tetraspanin-enriched microdomains (TERMs), which act as platforms for receptor clustering and signaling. Plays an essential role in migrasome formation and migration on retracting fibers at the rear end of migrating cells. Migrasomes are cellular organelles that form as large vesicle-like structures on retraction fibers of migrating cells. Mechanistically, acts as a membrane curvature sensor and participates in stabilizing the migrasome structure in a late stage of biogenesis. May also play a regulatory role for the histamine H4 receptor/HRH4 without affecting histamine binding to HRH4 or signaling. This chain is Tetraspanin-4 (TSPAN4), found in Homo sapiens (Human).